A 60-amino-acid polypeptide reads, in one-letter code: Translational regulator CsrA (60 aa).

The protein belongs to the CsrA/RsmA family. Homodimer; the beta-strands of each monomer intercalate to form a hydrophobic core, while the alpha-helices form wings that extend away from the core.

Its subcellular location is the cytoplasm. A key translational regulator that binds mRNA to regulate translation initiation and/or mRNA stability. Mediates global changes in gene expression, shifting from rapid growth to stress survival by linking envelope stress, the stringent response and the catabolite repression systems. Usually binds in the 5'-UTR; binding at or near the Shine-Dalgarno sequence prevents ribosome-binding, repressing translation, binding elsewhere in the 5'-UTR can activate translation and/or stabilize the mRNA. Its function is antagonized by small RNA(s). The polypeptide is Translational regulator CsrA (Histophilus somni (strain 2336) (Haemophilus somnus)).